Reading from the N-terminus, the 72-residue chain is UPF0154 protein BH2350 (72 aa).

The chain crosses the membrane as a helical span at residues 3–23 (WMILLWITLGIVIGIAIGFFI).

It belongs to the UPF0154 family.

It is found in the membrane. This chain is UPF0154 protein BH2350, found in Halalkalibacterium halodurans (strain ATCC BAA-125 / DSM 18197 / FERM 7344 / JCM 9153 / C-125) (Bacillus halodurans).